The chain runs to 418 residues: Serine--tRNA ligase (418 aa).

L-serine is bound at residue 231-233; the sequence is TAE. ATP is bound at residue 262–264; sequence RSE. Glu-285 serves as a coordination point for L-serine. Residue 349 to 352 coordinates ATP; it reads EISS. Residue Ser-385 participates in L-serine binding.

The protein belongs to the class-II aminoacyl-tRNA synthetase family. Type-1 seryl-tRNA synthetase subfamily. Homodimer. The tRNA molecule binds across the dimer.

It localises to the cytoplasm. The catalysed reaction is tRNA(Ser) + L-serine + ATP = L-seryl-tRNA(Ser) + AMP + diphosphate + H(+). The enzyme catalyses tRNA(Sec) + L-serine + ATP = L-seryl-tRNA(Sec) + AMP + diphosphate + H(+). It functions in the pathway aminoacyl-tRNA biosynthesis; selenocysteinyl-tRNA(Sec) biosynthesis; L-seryl-tRNA(Sec) from L-serine and tRNA(Sec): step 1/1. Catalyzes the attachment of serine to tRNA(Ser). Is also able to aminoacylate tRNA(Sec) with serine, to form the misacylated tRNA L-seryl-tRNA(Sec), which will be further converted into selenocysteinyl-tRNA(Sec). This Ureaplasma urealyticum serovar 10 (strain ATCC 33699 / Western) protein is Serine--tRNA ligase.